Here is a 108-residue protein sequence, read N- to C-terminus: UPF0060 membrane protein YnfA (108 aa).

Residues 1–5 (MIKTT) lie on the Periplasmic side of the membrane. Residues 6–26 (LLFFATALCEIIGCFLPWLWL) traverse the membrane as a helical segment. The Cytoplasmic portion of the chain corresponds to 27 to 30 (KRNA). The helical transmembrane segment at 31 to 51 (SIWLLLPAGISLALFVWLLTL) threads the bilayer. Over 52 to 60 (HPAASGRVY) the chain is Periplasmic. A helical transmembrane segment spans residues 61–81 (AAYGGVYVCTALMWLRVVDGV). Residues 82-84 (KLT) are Cytoplasmic-facing. A helical transmembrane segment spans residues 85–105 (LYDWTGPLIALCGMLIIVVGW). The Periplasmic portion of the chain corresponds to 106–108 (GRT).

It belongs to the UPF0060 family.

It is found in the cell inner membrane. The chain is UPF0060 membrane protein YnfA from Escherichia coli O157:H7.